A 380-amino-acid chain; its full sequence is MKNISLLGASGSIGTQTLDVLRSHPDQFRLVAFSVGKNIDYAVKVIQEFSPQIVSVQREEDVLKLQAVSGNTKIVYGSEGLLEVALHPDAEIVVNAVVGSVGLLPTLRAIEAKKTIGIANKETLVTAGHLVMEAARKHNVSLLPVDSEHSAIFQCLNGENEKRISRLIITASGGSFRDKTRDELHHVTVEDALRHPNWSMGSKITIDSATMMNKGLEVIEAHWLFGIPYEQIDVVLHKESIIHSMVEFEDRSVMAQLGSPDMRVPIQYALTYPDRLPLSDTKQLNLWEMGTLHFEKMNQERFRCLRFAYEAGKTGGSMPAVMNAANEVAVEAFLQKRIGFLTVEDLIEKAMNHHNVIARPSLEEILEIDAATRRFVMEQI.

NADPH is bound by residues serine 10, glycine 11, serine 12, isoleucine 13, glycine 36, lysine 37, asparagine 38, and asparagine 120. Residue lysine 121 participates in 1-deoxy-D-xylulose 5-phosphate binding. Glutamate 122 lines the NADPH pocket. Aspartate 146 is a Mn(2+) binding site. The 1-deoxy-D-xylulose 5-phosphate site is built by serine 147, glutamate 148, serine 172, and histidine 195. Position 148 (glutamate 148) interacts with Mn(2+). Glycine 201 contributes to the NADPH binding site. Residues serine 208, asparagine 213, lysine 214, and glutamate 217 each contribute to the 1-deoxy-D-xylulose 5-phosphate site. Mn(2+) is bound at residue glutamate 217.

Belongs to the DXR family. Requires Mg(2+) as cofactor. It depends on Mn(2+) as a cofactor.

The enzyme catalyses 2-C-methyl-D-erythritol 4-phosphate + NADP(+) = 1-deoxy-D-xylulose 5-phosphate + NADPH + H(+). It functions in the pathway isoprenoid biosynthesis; isopentenyl diphosphate biosynthesis via DXP pathway; isopentenyl diphosphate from 1-deoxy-D-xylulose 5-phosphate: step 1/6. In terms of biological role, catalyzes the NADPH-dependent rearrangement and reduction of 1-deoxy-D-xylulose-5-phosphate (DXP) to 2-C-methyl-D-erythritol 4-phosphate (MEP). In Bacillus cereus (strain AH187), this protein is 1-deoxy-D-xylulose 5-phosphate reductoisomerase.